The sequence spans 944 residues: 2-oxoglutarate dehydrogenase E1 component (944 aa).

Residues 914-944 (RRRRSSPAEGDPTVHKKEQERIVSDSLTRKN) form a disordered region. Positions 925 to 936 (PTVHKKEQERIV) are enriched in basic and acidic residues.

This sequence belongs to the alpha-ketoglutarate dehydrogenase family. As to quaternary structure, homodimer. Part of the 2-oxoglutarate dehydrogenase (OGDH) complex composed of E1 (2-oxoglutarate dehydrogenase), E2 (dihydrolipoamide succinyltransferase) and E3 (dihydrolipoamide dehydrogenase); the complex contains multiple copies of the three enzymatic components (E1, E2 and E3). The cofactor is thiamine diphosphate.

The enzyme catalyses N(6)-[(R)-lipoyl]-L-lysyl-[protein] + 2-oxoglutarate + H(+) = N(6)-[(R)-S(8)-succinyldihydrolipoyl]-L-lysyl-[protein] + CO2. In terms of biological role, E1 component of the 2-oxoglutarate dehydrogenase (OGDH) complex which catalyzes the decarboxylation of 2-oxoglutarate, the first step in the conversion of 2-oxoglutarate to succinyl-CoA and CO(2). The sequence is that of 2-oxoglutarate dehydrogenase E1 component from Bacillus licheniformis (strain ATCC 14580 / DSM 13 / JCM 2505 / CCUG 7422 / NBRC 12200 / NCIMB 9375 / NCTC 10341 / NRRL NRS-1264 / Gibson 46).